The chain runs to 496 residues: MEYTTILVGFLIGFVLFKALTRKSKNLPPGPHVLPIIGNLHLVGSIPHKSILKLAEKYGPIMSLQFGQIPTIVVSSPSMAKEILQKQDVAFAGKRIPDALNAHNHWQFSVVWLPANSLWRTLRKILTSNIFTNNRLEASQHLRSQKVRDLVEYCKKSGDKGEAVEIGQAAYRTSLNLLSSTIFSKDLADYYSETGAPREFKDAIWNILVESVKPNLADFVPILSMFDLQGIKRRAGIHFGKGLKIMEGLVNERLEHRETHGATHNDILDIFLNYCDEHPDELDRHRVKHTILDLFIAGTDTTSSVTEWTMAELIQNPQVMKRAKDELAQVIGKGKCLEESDVARLPYLRCIMKEALRKHPPGPFLFPRRPEEDVEVAGYTIPKGAQVLVSIYALGRDPNSWEDPLAFKPERFLDSELDFRGNNFEMLPFGAGRRSCPGLPMAVRMVPLLLGSLINSFDWVLDGGMKPEDLSMEEKVGLTAQLAHPLKIVPIPVKEE.

Residues 3–23 (YTTILVGFLIGFVLFKALTRK) traverse the membrane as a helical segment. Residue C436 coordinates heme.

Belongs to the cytochrome P450 family. Heme is required as a cofactor.

The protein localises to the endoplasmic reticulum membrane. The catalysed reaction is (2E)-geranylhydroquinone + reduced [NADPH--hemoprotein reductase] + O2 = (2Z)-3''-hydroxygeranylhydroquinone + oxidized [NADPH--hemoprotein reductase] + H2O + H(+). Hydroxylase involved in the biosynthesis pathway of the red naphthoquinone pigment shikonin. Catalyzes the key step C-3''-hydroxylation of the prenylated phenolic intermediate geranylhydroquinone to form 3''-hydroxygeranylhydroquinone. In Arnebia euchroma (Pink arnebia), this protein is Geranylhydroquinone 3''-hydroxylase CYP76B74.